Reading from the N-terminus, the 680-residue chain is Conserved oligomeric Golgi complex subunit 6 (680 aa).

Residues 479–517 (HKSKKSGQLPRRSRTSSDSSQLTSVDALLSSSPSPPQNN) form a disordered region.

Belongs to the COG6 family. As to quaternary structure, component of the conserved oligomeric Golgi complex which is composed of eight different subunits and is required for normal Golgi morphology and localization. Interacts with COG5, COG7 and COG8.

It is found in the golgi apparatus membrane. Required for normal Golgi function. In Arabidopsis thaliana (Mouse-ear cress), this protein is Conserved oligomeric Golgi complex subunit 6.